The primary structure comprises 511 residues: Myrosinase 4 (511 aa).

The first 23 residues, 1–23, serve as a signal peptide directing secretion; that stretch reads MAIPKAHYSLAVLVLLFVVVSSS. Disulfide bonds link Cys-31–Cys-450, Cys-39–Cys-445, and Cys-230–Cys-233. N-linked (GlcNAc...) asparagine glycans are attached at residues Asn-46 and Asn-53. A beta-D-glucoside-binding positions include Gln-64, His-165, and 210 to 211; that span reads NQ. Tyr-351 and Glu-418 together coordinate a beta-D-glucoside. Glu-418 (nucleophile) is an active-site residue. Residue Asn-428 is glycosylated (N-linked (GlcNAc...) asparagine). A beta-D-glucoside is bound by residues Trp-467, 474–475, and Phe-483; that span reads EF. A glycan (N-linked (GlcNAc...) asparagine) is linked at Asn-489.

It belongs to the glycosyl hydrolase 1 family. Specifically expressed in roots.

It carries out the reaction a thioglucoside + H2O = a sugar + a thiol.. The catalysed reaction is Hydrolysis of terminal, non-reducing beta-D-glucosyl residues with release of beta-D-glucose.. Hydrolyzes sinigrin and, with lower efficiency, p-nitrophenyl beta-D-glucoside. The polypeptide is Myrosinase 4 (Arabidopsis thaliana (Mouse-ear cress)).